A 217-amino-acid polypeptide reads, in one-letter code: Octanoyltransferase (217 aa).

In terms of domain architecture, BPL/LPL catalytic spans 32–207; it reads SESHDELWIV…TFSQLLGYQH (176 aa). Residues 71–78, 138–140, and 151–153 contribute to the substrate site; these read RGGQVTYH, SLG, and GLA. Cys169 (acyl-thioester intermediate) is an active-site residue.

It belongs to the LipB family.

It localises to the cytoplasm. The enzyme catalyses octanoyl-[ACP] + L-lysyl-[protein] = N(6)-octanoyl-L-lysyl-[protein] + holo-[ACP] + H(+). It functions in the pathway protein modification; protein lipoylation via endogenous pathway; protein N(6)-(lipoyl)lysine from octanoyl-[acyl-carrier-protein]: step 1/2. In terms of biological role, catalyzes the transfer of endogenously produced octanoic acid from octanoyl-acyl-carrier-protein onto the lipoyl domains of lipoate-dependent enzymes. Lipoyl-ACP can also act as a substrate although octanoyl-ACP is likely to be the physiological substrate. The sequence is that of Octanoyltransferase from Shewanella baltica (strain OS223).